A 510-amino-acid polypeptide reads, in one-letter code: NAD(P)H-quinone oxidoreductase subunit 2 B, chloroplastic (510 aa).

The next 13 membrane-spanning stretches (helical) occupy residues Leu-24–Leu-44, Trp-59–Trp-79, Ile-99–Ile-119, Met-124–Cys-144, Leu-149–Tyr-169, Leu-184–Leu-204, Ile-229–Phe-249, Thr-262–Phe-284, Trp-295–Ile-315, Met-323–Asp-343, Tyr-354–Leu-374, Ala-395–Phe-415, and Leu-418–Leu-438.

The protein belongs to the complex I subunit 2 family. NDH is composed of at least 16 different subunits, 5 of which are encoded in the nucleus.

The protein localises to the plastid. It localises to the chloroplast thylakoid membrane. It carries out the reaction a plastoquinone + NADH + (n+1) H(+)(in) = a plastoquinol + NAD(+) + n H(+)(out). It catalyses the reaction a plastoquinone + NADPH + (n+1) H(+)(in) = a plastoquinol + NADP(+) + n H(+)(out). In terms of biological role, NDH shuttles electrons from NAD(P)H:plastoquinone, via FMN and iron-sulfur (Fe-S) centers, to quinones in the photosynthetic chain and possibly in a chloroplast respiratory chain. The immediate electron acceptor for the enzyme in this species is believed to be plastoquinone. Couples the redox reaction to proton translocation, and thus conserves the redox energy in a proton gradient. This is NAD(P)H-quinone oxidoreductase subunit 2 B, chloroplastic from Lemna minor (Common duckweed).